The following is a 199-amino-acid chain: 7-methyl-GTP pyrophosphatase (199 aa).

Residue D76 is the Proton acceptor of the active site.

It belongs to the Maf family. YceF subfamily. A divalent metal cation is required as a cofactor.

It localises to the cytoplasm. It catalyses the reaction N(7)-methyl-GTP + H2O = N(7)-methyl-GMP + diphosphate + H(+). In terms of biological role, nucleoside triphosphate pyrophosphatase that hydrolyzes 7-methyl-GTP (m(7)GTP). May have a dual role in cell division arrest and in preventing the incorporation of modified nucleotides into cellular nucleic acids. The protein is 7-methyl-GTP pyrophosphatase of Rhizobium etli (strain ATCC 51251 / DSM 11541 / JCM 21823 / NBRC 15573 / CFN 42).